The primary structure comprises 31 residues: M-poneritoxin-Nc3b (31 aa).

The protein belongs to the ponericin-G family. In terms of tissue distribution, expressed by the venom gland.

The protein localises to the secreted. The protein resides in the target cell membrane. Functionally, membrane-perturbating peptide with a few moderate activities. It is insecticidal, since it induces reversible paralysis in insects (L.cuprina) after 1 hour, but fails to kill them. It is also antiparasitic, since it moderately inhibits the larval development of the major pathogenic nematode of ruminants (H.contortus, IC(50)=23.2 uM) and reduces the motility of adult males of the other nematode B.malayi. It does not show antibacterial activity (MIC&gt;40 uM). It is not cytotoxic to HEK293 cells and does not induce hemolysis in human erythrocytes. It does not cause an increase in intracellular calcium concentration on neuronal and epithelial cell lines. This Neoponera commutata (Large hunting ant) protein is M-poneritoxin-Nc3b.